Consider the following 302-residue polypeptide: MTNLNASQANHRNFILTGIPGTPDKNPWLAFPLGFLYTLTLLGNGTILAVIKVEPSLHEPTYYFLSILALTDVSLSMSTLPSMLSIYWFNAPQIVFDACIMQMFFIHVFGIVESGVLVSMAFDRFVAIRNPLHYVSILTHDVIRKTGIAVLTRAVCVVFPVPFLIKCLPFCHSNVLSHSYCLHQNMMRLACASTRINSLYGLIVVIFTLGLDVLLTLLSYVLTLKTVLGIVSRGERLKTLSTCLSHMSTVLLFYVPFMGAASMIHRFWEHLSPVVHMVMADIYLLLPPVLNPIVYSVKTKQI.

Over 1–27 the chain is Extracellular; it reads MTNLNASQANHRNFILTGIPGTPDKNP. N5 is a glycosylation site (N-linked (GlcNAc...) asparagine). Residues 28–48 form a helical membrane-spanning segment; sequence WLAFPLGFLYTLTLLGNGTIL. At 49 to 56 the chain is on the cytoplasmic side; sequence AVIKVEPS. A helical membrane pass occupies residues 57-77; that stretch reads LHEPTYYFLSILALTDVSLSM. Over 78–101 the chain is Extracellular; it reads STLPSMLSIYWFNAPQIVFDACIM. C99 and C191 are joined by a disulfide. A helical membrane pass occupies residues 102–122; it reads QMFFIHVFGIVESGVLVSMAF. Over 123 to 141 the chain is Cytoplasmic; sequence DRFVAIRNPLHYVSILTHD. A helical membrane pass occupies residues 142 to 162; sequence VIRKTGIAVLTRAVCVVFPVP. Over 163 to 198 the chain is Extracellular; the sequence is FLIKCLPFCHSNVLSHSYCLHQNMMRLACASTRINS. Residues 199–219 form a helical membrane-spanning segment; the sequence is LYGLIVVIFTLGLDVLLTLLS. The Cytoplasmic portion of the chain corresponds to 220 to 239; the sequence is YVLTLKTVLGIVSRGERLKT. Residues 240–260 traverse the membrane as a helical segment; it reads LSTCLSHMSTVLLFYVPFMGA. At 261–276 the chain is on the extracellular side; that stretch reads ASMIHRFWEHLSPVVH. A helical transmembrane segment spans residues 277–297; it reads MVMADIYLLLPPVLNPIVYSV. Residues 298 to 302 lie on the Cytoplasmic side of the membrane; that stretch reads KTKQI.

The protein belongs to the G-protein coupled receptor 1 family.

It is found in the cell membrane. Odorant receptor. This chain is Olfactory receptor 51H1 (OR51H1), found in Homo sapiens (Human).